The sequence spans 589 residues: Aspartate--tRNA ligase 2 (589 aa).

Residue Glu-174 participates in L-aspartate binding. Residues 198–201 are aspartate; it reads QITK. Residue Arg-220 participates in L-aspartate binding. ATP is bound by residues 220-222 and Gln-229; that span reads RDE. His-443 contributes to the L-aspartate binding site. Residue Glu-477 participates in ATP binding. Arg-484 serves as a coordination point for L-aspartate. 529–532 serves as a coordination point for ATP; it reads GLDR.

This sequence belongs to the class-II aminoacyl-tRNA synthetase family. Type 1 subfamily. In terms of assembly, homodimer.

The protein localises to the cytoplasm. It catalyses the reaction tRNA(Asp) + L-aspartate + ATP = L-aspartyl-tRNA(Asp) + AMP + diphosphate. Functionally, catalyzes the attachment of L-aspartate to tRNA(Asp) in a two-step reaction: L-aspartate is first activated by ATP to form Asp-AMP and then transferred to the acceptor end of tRNA(Asp). The protein is Aspartate--tRNA ligase 2 of Streptococcus mutans serotype c (strain ATCC 700610 / UA159).